The chain runs to 508 residues: Cytochrome P450 4A12B (508 aa).

A signal peptide spans 1 to 37; that stretch reads MSASALSSIRFPGSISEYLQVASVLSLLLLLFKTAQL. Positions 319 and 455 each coordinate heme.

This sequence belongs to the cytochrome P450 family. The cofactor is heme. As to expression, expressed in lung, but almost undetectable in the kidneys of five different strains.

It is found in the endoplasmic reticulum membrane. Its subcellular location is the microsome membrane. It catalyses the reaction an organic molecule + reduced [NADPH--hemoprotein reductase] + O2 = an alcohol + oxidized [NADPH--hemoprotein reductase] + H2O + H(+). The catalysed reaction is dodecanoate + reduced [NADPH--hemoprotein reductase] + O2 = 11-hydroxydodecanoate + oxidized [NADPH--hemoprotein reductase] + H2O + H(+). The enzyme catalyses dodecanoate + reduced [NADPH--hemoprotein reductase] + O2 = 12-hydroxydodecanoate + oxidized [NADPH--hemoprotein reductase] + H2O + H(+). It carries out the reaction (5Z,8Z,11Z,14Z)-eicosatetraenoate + reduced [NADPH--hemoprotein reductase] + O2 = 18-hydroxy-(5Z,8Z,11Z,14Z)-eicosatetraenoate + oxidized [NADPH--hemoprotein reductase] + H2O + H(+). It catalyses the reaction (5Z,8Z,11Z,14Z)-eicosatetraenoate + reduced [NADPH--hemoprotein reductase] + O2 = 19-hydroxy-(5Z,8Z,11Z,14Z)-eicosatetraenoate + oxidized [NADPH--hemoprotein reductase] + H2O + H(+). The catalysed reaction is (5Z,8Z,11Z,14Z)-eicosatetraenoate + reduced [NADPH--hemoprotein reductase] + O2 = 20-hydroxy-(5Z,8Z,11Z,14Z)-eicosatetraenoate + oxidized [NADPH--hemoprotein reductase] + H2O + H(+). The enzyme catalyses (5Z,8Z,11Z,14Z,17Z)-eicosapentaenoate + reduced [NADPH--hemoprotein reductase] + O2 = 19-hydroxy-(5Z,8Z,11Z,14Z,17Z)-eicosapentaenoate + oxidized [NADPH--hemoprotein reductase] + H2O + H(+). It carries out the reaction (5Z,8Z,11Z,14Z,17Z)-eicosapentaenoate + reduced [NADPH--hemoprotein reductase] + O2 = 20-hydroxy-(5Z,8Z,11Z,14Z,17Z)-eicosapentaenoate + oxidized [NADPH--hemoprotein reductase] + H2O + H(+). It catalyses the reaction (5Z,8Z,11Z,14Z,17Z)-eicosapentaenoate + reduced [NADPH--hemoprotein reductase] + O2 = (17S,18R)-epoxy-(5Z,8Z,11Z,14Z)-eicosatetraenoate + oxidized [NADPH--hemoprotein reductase] + H2O + H(+). The catalysed reaction is (5Z,8Z,11Z,14Z,17Z)-eicosapentaenoate + reduced [NADPH--hemoprotein reductase] + O2 = (17R,18S)-epoxy-(5Z,8Z,11Z,14Z)-eicosatetraenoate + oxidized [NADPH--hemoprotein reductase] + H2O + H(+). The protein operates within lipid metabolism; fatty acid metabolism. With respect to regulation, activated by cytochrome b5. The Vmax almost doubles in the presence of cytochrome b5. A cytochrome P450 monooxygenase involved in the metabolism of fatty acids and their oxygenated derivatives (oxylipins). Mechanistically, uses molecular oxygen inserting one oxygen atom into a substrate, and reducing the second into a water molecule, with two electrons provided by NADPH via cytochrome P450 reductase (CPR; NADPH-ferrihemoprotein reductase). Catalyzes predominantly the oxidation of the terminal carbon (omega-oxidation) of saturated and unsaturated fatty acids. May act as a major omega-hydroxylase for dodecanoic (lauric) acid in kidney. Participates in omega-hydroxylation of (5Z,8Z,11Z,14Z)-eicosatetraenoic acid (arachidonate) to 20-hydroxyeicosatetraenoic acid (20-HETE), a signaling molecule acting both as vasoconstrictive and natriuretic with overall effect on arterial blood pressure. Acts as an omega-hydroxylase and epoxidase toward (5Z,8Z,11Z,14Z,17Z)-eicosapentaenoc acid (EPA). Catalyzes the epoxidation of the last double bond of EPA with no preferred stereoselectivity, producing both (R,S) and (S,R) stereoisomers. Can also catalyze the omega-1 and omega-2 oxidation of fatty acids with lower efficiency. The polypeptide is Cytochrome P450 4A12B (Mus musculus (Mouse)).